A 173-amino-acid polypeptide reads, in one-letter code: Adenine phosphoribosyltransferase (173 aa).

The protein belongs to the purine/pyrimidine phosphoribosyltransferase family. In terms of assembly, homodimer.

Its subcellular location is the cytoplasm. The catalysed reaction is AMP + diphosphate = 5-phospho-alpha-D-ribose 1-diphosphate + adenine. Its pathway is purine metabolism; AMP biosynthesis via salvage pathway; AMP from adenine: step 1/1. Catalyzes a salvage reaction resulting in the formation of AMP, that is energically less costly than de novo synthesis. This is Adenine phosphoribosyltransferase from Caldanaerobacter subterraneus subsp. tengcongensis (strain DSM 15242 / JCM 11007 / NBRC 100824 / MB4) (Thermoanaerobacter tengcongensis).